Reading from the N-terminus, the 323-residue chain is ATP synthase gamma chain (323 aa).

The disordered stretch occupies residues 215-237 (PAGGPAKEQEQGDEGGHGAPSAA). Over residues 221–230 (KEQEQGDEGG) the composition is skewed to basic and acidic residues.

Belongs to the ATPase gamma chain family. F-type ATPases have 2 components, CF(1) - the catalytic core - and CF(0) - the membrane proton channel. CF(1) has five subunits: alpha(3), beta(3), gamma(1), delta(1), epsilon(1). CF(0) has three main subunits: a, b and c.

The protein localises to the cell inner membrane. Produces ATP from ADP in the presence of a proton gradient across the membrane. The gamma chain is believed to be important in regulating ATPase activity and the flow of protons through the CF(0) complex. The chain is ATP synthase gamma chain from Sorangium cellulosum (strain So ce56) (Polyangium cellulosum (strain So ce56)).